Here is a 234-residue protein sequence, read N- to C-terminus: Large ribosomal subunit protein eL6 (234 aa).

Belongs to the eukaryotic ribosomal protein eL6 family.

The sequence is that of Large ribosomal subunit protein eL6 (RPL6) from Mesembryanthemum crystallinum (Common ice plant).